Here is a 427-residue protein sequence, read N- to C-terminus: 3-phosphoshikimate 1-carboxyvinyltransferase (427 aa).

3-phosphoshikimate-binding residues include Lys-22, Ser-23, and Arg-27. Lys-22 provides a ligand contact to phosphoenolpyruvate. Phosphoenolpyruvate contacts are provided by Gly-96 and Arg-124. Positions 170, 171, 172, 199, 313, 336, and 340 each coordinate 3-phosphoshikimate. Residue Gln-172 coordinates phosphoenolpyruvate. Asp-313 functions as the Proton acceptor in the catalytic mechanism. Arg-344, Arg-386, and Lys-411 together coordinate phosphoenolpyruvate.

It belongs to the EPSP synthase family. Monomer.

The protein localises to the cytoplasm. The catalysed reaction is 3-phosphoshikimate + phosphoenolpyruvate = 5-O-(1-carboxyvinyl)-3-phosphoshikimate + phosphate. Its pathway is metabolic intermediate biosynthesis; chorismate biosynthesis; chorismate from D-erythrose 4-phosphate and phosphoenolpyruvate: step 6/7. Its function is as follows. Catalyzes the transfer of the enolpyruvyl moiety of phosphoenolpyruvate (PEP) to the 5-hydroxyl of shikimate-3-phosphate (S3P) to produce enolpyruvyl shikimate-3-phosphate and inorganic phosphate. This is 3-phosphoshikimate 1-carboxyvinyltransferase from Aeromonas salmonicida.